The chain runs to 464 residues: 3-isopropylmalate dehydratase large subunit (464 aa).

Residues Cys337, Cys397, and Cys400 each coordinate [4Fe-4S] cluster.

The protein belongs to the aconitase/IPM isomerase family. LeuC type 1 subfamily. In terms of assembly, heterodimer of LeuC and LeuD. The cofactor is [4Fe-4S] cluster.

The catalysed reaction is (2R,3S)-3-isopropylmalate = (2S)-2-isopropylmalate. The protein operates within amino-acid biosynthesis; L-leucine biosynthesis; L-leucine from 3-methyl-2-oxobutanoate: step 2/4. Catalyzes the isomerization between 2-isopropylmalate and 3-isopropylmalate, via the formation of 2-isopropylmaleate. The protein is 3-isopropylmalate dehydratase large subunit of Bacillus mycoides (strain KBAB4) (Bacillus weihenstephanensis).